A 423-amino-acid chain; its full sequence is MTTTELTGWPAPTASGRVDAVVHLPGSKSMTNRALVLAALAAEPTAIRGGLRARDTELMMAGLRSLGVGIDDAGDMWLVSPAELRGPAAIDCGLAGTVMRFLLAAATLATGEVSFDGDPRARERPLRPLLDALRQLGAELRDTGGRLPVTVVGSGHLPGGHCVVDASASSQFVSALLLVAPRADTPVTVGHVGRTLPSVPHITMTVAMLRERGVEVAGTDGSWRVQPGPIRGGTVQIEPDLSNAAPFLAAALVTGGRVRVPDWPMRTTQAGDALRDLLTAMGARCELDATGLTVTGGPVIHGLDADLRDVSELVPTLAALAALADRPSTFRGIGHMRGHETDRLAALAAELTRLGGDVTATDDGLVIRPRPLHGGVFHSYGDHRMATTGAVLGLVIPGIVVENIQTVAKTMPTFVELWTGMLR.

3-phosphoshikimate contacts are provided by Lys28, Ser29, and Arg33. Lys28 contacts phosphoenolpyruvate. The phosphoenolpyruvate site is built by Gly96 and Arg124. Residues Ser169, Ser170, Gln171, Ser198, Glu312, and His339 each coordinate 3-phosphoshikimate. Gln171 lines the phosphoenolpyruvate pocket. Glu312 (proton acceptor) is an active-site residue. Residues Arg343, Arg384, and Lys409 each contribute to the phosphoenolpyruvate site.

Belongs to the EPSP synthase family. In terms of assembly, monomer.

The protein localises to the cytoplasm. The enzyme catalyses 3-phosphoshikimate + phosphoenolpyruvate = 5-O-(1-carboxyvinyl)-3-phosphoshikimate + phosphate. Its pathway is metabolic intermediate biosynthesis; chorismate biosynthesis; chorismate from D-erythrose 4-phosphate and phosphoenolpyruvate: step 6/7. Its function is as follows. Catalyzes the transfer of the enolpyruvyl moiety of phosphoenolpyruvate (PEP) to the 5-hydroxyl of shikimate-3-phosphate (S3P) to produce enolpyruvyl shikimate-3-phosphate and inorganic phosphate. This is 3-phosphoshikimate 1-carboxyvinyltransferase from Acidothermus cellulolyticus (strain ATCC 43068 / DSM 8971 / 11B).